The primary structure comprises 259 residues: S-methyl-5'-thioadenosine phosphorylase (259 aa).

Residues serine 9 and 50-51 (RH) contribute to the phosphate site. Methionine 175 lines the substrate pocket. Threonine 176 lines the phosphate pocket. 199-201 (DLD) is a binding site for substrate.

The protein belongs to the PNP/MTAP phosphorylase family. MTAP subfamily. In terms of assembly, homohexamer. Dimer of a homotrimer.

The enzyme catalyses S-methyl-5'-thioadenosine + phosphate = 5-(methylsulfanyl)-alpha-D-ribose 1-phosphate + adenine. The protein operates within amino-acid biosynthesis; L-methionine biosynthesis via salvage pathway; S-methyl-5-thio-alpha-D-ribose 1-phosphate from S-methyl-5'-thioadenosine (phosphorylase route): step 1/1. Functionally, catalyzes the reversible phosphorylation of S-methyl-5'-thioadenosine (MTA) to adenine and 5-methylthioribose-1-phosphate. Involved in the breakdown of MTA, a major by-product of polyamine biosynthesis. Responsible for the first step in the methionine salvage pathway after MTA has been generated from S-adenosylmethionine. Has broad substrate specificity with 6-aminopurine nucleosides as preferred substrates. This Mycolicibacterium smegmatis (strain ATCC 700084 / mc(2)155) (Mycobacterium smegmatis) protein is S-methyl-5'-thioadenosine phosphorylase.